The chain runs to 132 residues: Ragulator complex protein LAMTOR3 homolog (132 aa).

It belongs to the LAMTOR3 family. Part of the Ragulator complex.

Its function is as follows. Regulator of the TOR pathway, a signaling cascade that promotes cell growth in response to growth factors, energy levels, and amino acids. May activate the TOR signaling cascade in response to amino acids. In Dictyostelium discoideum (Social amoeba), this protein is Ragulator complex protein LAMTOR3 homolog.